Consider the following 88-residue polypeptide: Protein MATERNALLY EXPRESSED GENE 1 (88 aa).

An N-terminal signal peptide occupies residues 1 to 27 (MEYKKRVDALVFFSLLLLGYFAAHAHG). Asn36 carries an N-linked (GlcNAc...) asparagine glycan. Disulfide bonds link Cys65–Cys87 and Cys68–Cys76.

The protein belongs to the MEG family. Post-translationally, glycosylated. As to expression, expressed exclusively in endosperm. Found in basal endosperm transfer cells.

Its subcellular location is the secreted. The protein resides in the cell wall. It is found in the cell membrane. It localises to the extracellular space. The protein localises to the extracellular matrix. Functionally, regulates maternal nutrient uptake, sucrose partitioning, and seed biomass yield. Necessary and sufficient for the establishment and differentiation of the endosperm nutrient transfer cells located at the mother:seed interface. Exclusive expression of the maternal allele at the early stages of endosperm development. The maternal allele is hypomethylated. At later stages, expression becomes biallelic. Regulated by the transcription factor MRP1. This is Protein MATERNALLY EXPRESSED GENE 1 (MEG1) from Zea mays (Maize).